Reading from the N-terminus, the 779-residue chain is Polyribonucleotide nucleotidyltransferase (779 aa).

The Mg(2+) site is built by Asp490 and Asp496. Residues 557–618 form the KH domain; that stretch reads PHILSLKINP…EAVKARIEAV (62 aa). An S1 motif domain is found at 625–693; that stretch reads GEEFEGTVVK…DRGKIDLIRP (69 aa). The span at 699–752 shows a compositional bias: basic and acidic residues; it reads VPLREPRAPRGGDRGPRRDSDRGGDRGPRREFSDRGPRPEGARSERPEGQRTER. Residues 699–779 form a disordered region; sequence VPLREPRAPR…AAPVFPRRED (81 aa). Residues 757 to 767 are compositionally biased toward polar residues; the sequence is PATQESSQSSD.

Belongs to the polyribonucleotide nucleotidyltransferase family. Mg(2+) is required as a cofactor.

The protein resides in the cytoplasm. The enzyme catalyses RNA(n+1) + phosphate = RNA(n) + a ribonucleoside 5'-diphosphate. Functionally, involved in mRNA degradation. Catalyzes the phosphorolysis of single-stranded polyribonucleotides processively in the 3'- to 5'-direction. This Deinococcus radiodurans (strain ATCC 13939 / DSM 20539 / JCM 16871 / CCUG 27074 / LMG 4051 / NBRC 15346 / NCIMB 9279 / VKM B-1422 / R1) protein is Polyribonucleotide nucleotidyltransferase.